The sequence spans 91 residues: Succinate dehydrogenase assembly factor 1A, mitochondrial (91 aa).

This sequence belongs to the complex I LYR family. SDHAF1 subfamily. As to quaternary structure, interacts with the iron-sulfur protein subunit within the SDH catalytic dimer.

The protein localises to the mitochondrion matrix. Plays an essential role in the assembly of succinate dehydrogenase (SDH), an enzyme complex (also referred to as respiratory complex II) that is a component of both the tricarboxylic acid (TCA) cycle and the mitochondrial electron transport chain, and which couples the oxidation of succinate to fumarate with the reduction of ubiquinone (coenzyme Q) to ubiquinol. Promotes maturation of the iron-sulfur protein subunit of the SDH catalytic dimer, protecting it from the deleterious effects of oxidants. May act together with SDHAF3. This is Succinate dehydrogenase assembly factor 1A, mitochondrial from Dictyostelium discoideum (Social amoeba).